The following is a 647-amino-acid chain: DNA topoisomerase 3 (647 aa).

The region spanning 2–135 (TRLFIAEKPS…KKETVQRLLI (134 aa)) is the Toprim domain. Positions 8, 104, and 106 each coordinate Mg(2+). The region spanning 156–608 (FIPLSVSALA…TLQGRLEQLI (453 aa)) is the Topo IA-type catalytic domain. The segment at 195–200 (SVGRVQ) is interaction with DNA. The active-site O-(5'-phospho-DNA)-tyrosine intermediate is Y332.

Belongs to the type IA topoisomerase family. The cofactor is Mg(2+).

The catalysed reaction is ATP-independent breakage of single-stranded DNA, followed by passage and rejoining.. Functionally, releases the supercoiling and torsional tension of DNA, which is introduced during the DNA replication and transcription, by transiently cleaving and rejoining one strand of the DNA duplex. Introduces a single-strand break via transesterification at a target site in duplex DNA. The scissile phosphodiester is attacked by the catalytic tyrosine of the enzyme, resulting in the formation of a DNA-(5'-phosphotyrosyl)-enzyme intermediate and the expulsion of a 3'-OH DNA strand. The free DNA strand then undergoes passage around the unbroken strand, thus removing DNA supercoils. Finally, in the religation step, the DNA 3'-OH attacks the covalent intermediate to expel the active-site tyrosine and restore the DNA phosphodiester backbone. The sequence is that of DNA topoisomerase 3 from Vibrio cholerae serotype O1 (strain ATCC 39315 / El Tor Inaba N16961).